The sequence spans 437 residues: Nuclear hormone receptor family member nhr-100 (437 aa).

The nuclear receptor DNA-binding region spans D21 to S96. 2 NR C4-type zinc fingers span residues C24–C44 and C60–C79. The region spanning Q141–H409 is the NR LBD domain.

The protein belongs to the nuclear hormone receptor family.

The protein localises to the nucleus. Its function is as follows. Orphan nuclear receptor. The polypeptide is Nuclear hormone receptor family member nhr-100 (nhr-100) (Caenorhabditis elegans).